The sequence spans 88 residues: Alpha-conotoxin GVIIIB (88 aa).

A signal peptide spans 1-20 (MMSKMGAMFVLLLLFTLASS). A propeptide spanning residues 21-43 (QQEGDVQARKTRPKSDFYRALPR) is cleaved from the precursor. The residue at position 87 (Thr87) is a Threonine amide.

The protein belongs to the conotoxin S superfamily. Post-translationally, contains 5 disulfide bonds. In terms of processing, the predominant peptide contains 2 hydroxyprolines, while 2 minor peptides contains 1 and 3 hydroxyprolines. As to expression, expressed by the venom duct.

Its subcellular location is the secreted. Its function is as follows. Alpha-conotoxins act on postsynaptic membranes, they bind to the nicotinic acetylcholine receptors (nAChR) and thus inhibit them. This toxin shows high activity on alpha-9-alpha-10 (CHRNA9-CHRNA10) (IC(50)=9.79 nM). It also shows weak activity on alpha-3-beta-2 (CHRNA3-CHRNB2) (IC(50)~1 uM), alpha-6/alpha-3-beta-2-beta-3 (CHRNA6/CHRNA3-CHRNB2-CHRNB3) (IC(50)~1 uM). The toxin binds to the same or overlapping binding sites than conotoxin RgIA (AC P0C1D0). The polypeptide is Alpha-conotoxin GVIIIB (Conus geographus (Geography cone)).